The chain runs to 136 residues: Large ribosomal subunit protein uL16 (136 aa).

The protein belongs to the universal ribosomal protein uL16 family. Part of the 50S ribosomal subunit.

Functionally, binds 23S rRNA and is also seen to make contacts with the A and possibly P site tRNAs. In Pectobacterium atrosepticum (strain SCRI 1043 / ATCC BAA-672) (Erwinia carotovora subsp. atroseptica), this protein is Large ribosomal subunit protein uL16.